The sequence spans 251 residues: 3-deoxy-manno-octulosonate cytidylyltransferase (251 aa).

This sequence belongs to the KdsB family.

Its subcellular location is the cytoplasm. The enzyme catalyses 3-deoxy-alpha-D-manno-oct-2-ulosonate + CTP = CMP-3-deoxy-beta-D-manno-octulosonate + diphosphate. The protein operates within nucleotide-sugar biosynthesis; CMP-3-deoxy-D-manno-octulosonate biosynthesis; CMP-3-deoxy-D-manno-octulosonate from 3-deoxy-D-manno-octulosonate and CTP: step 1/1. It functions in the pathway bacterial outer membrane biogenesis; lipopolysaccharide biosynthesis. Its function is as follows. Activates KDO (a required 8-carbon sugar) for incorporation into bacterial lipopolysaccharide in Gram-negative bacteria. This is 3-deoxy-manno-octulosonate cytidylyltransferase from Vibrio vulnificus (strain CMCP6).